Here is a 1381-residue protein sequence, read N- to C-terminus: Hepatocyte growth factor receptor (1381 aa).

An N-terminal signal peptide occupies residues 1 to 24; it reads MKAPTVLAPGILVLLFTLVQKSNG. The Extracellular portion of the chain corresponds to 25–933; sequence ECREALAKSE…VIVQSDQSFT (909 aa). Positions 27-516 constitute a Sema domain; it reads REALAKSEMN…TGKKITRIPL (490 aa). 3 N-linked (GlcNAc...) asparagine glycosylation sites follow: Asn45, Asn100, and Asn106. 4 disulfides stabilise this stretch: Cys95–Cys101, Cys98–Cys160, Cys133–Cys141, and Cys173–Cys176. N-linked (GlcNAc...) asparagine glycosylation is found at Asn203 and Asn359. 2 disulfide bridges follow: Cys299–Cys364 and Cys386–Cys398. 2 N-linked (GlcNAc...) asparagine glycosylation sites follow: Asn400 and Asn406. 4 cysteine pairs are disulfide-bonded: Cys521–Cys539, Cys527–Cys562, Cys530–Cys546, and Cys542–Cys552. A glycan (N-linked (GlcNAc...) asparagine) is linked at Asn554. IPT/TIG domains lie at 564–656, 658–740, and 743–837; these read PTVY…FSYV, PIIT…FSYR, and PIVY…LIYV. The O-linked (Man) threonine glycan is linked to Thr583. 2 N-linked (GlcNAc...) asparagine glycosylation sites follow: Asn608 and Asn636. Residues Thr677 and Thr762 are each glycosylated (O-linked (Man) threonine). N-linked (GlcNAc...) asparagine glycans are attached at residues Asn786 and Asn880. A helical membrane pass occupies residues 934-956; sequence GVIVGVVAISIILLLLLGLFLWL. The Cytoplasmic segment spans residues 957–1381; it reads KKKKQIKDLG…QDDLDGEVDT (425 aa). A Phosphoserine modification is found at Ser967. Thr978 carries the phosphothreonine modification. Ser991, Ser998, and Ser1001 each carry phosphoserine. Tyr1004 carries the phosphotyrosine modification. Residues 1079-1346 enclose the Protein kinase domain; that stretch reads VHFNEVIGRG…RISAIFSTFI (268 aa). ATP is bound by residues 1085–1093 and Lys1111; that span reads IGRGHFGCV. The active-site Proton acceptor is Asp1205. Residues 1213–1381 are interaction with RANBP9; that stretch reads LDEKFTVKVA…QDDLDGEVDT (169 aa). Tyr1231 is subject to Phosphotyrosine. Residues Tyr1235 and Tyr1236 each carry the phosphotyrosine; by autocatalysis modification. Phosphothreonine is present on Thr1290. The interaction with MUC20 stretch occupies residues 1321-1360; that stretch reads WHPKAEMRPSFSELVSRISAIFSTFIGEHYVHVNATYVNV. 2 positions are modified to phosphotyrosine; by autocatalysis: Tyr1350 and Tyr1357. Residue Tyr1366 is modified to Phosphotyrosine.

The protein belongs to the protein kinase superfamily. Tyr protein kinase family. Heterodimer made of an alpha chain (50 kDa) and a beta chain (145 kDa) which are disulfide linked. Binds PLXNB1. Interacts when phosphorylated with downstream effectors including STAT3, PIK3R1, SRC, PCLG1, GRB2 and GAB1. Interacts with SPSB1, SPSB2 and SPSB4. Interacts with INPP5D/SHIP1. When phosphorylated at Tyr-1357, interacts with INPPL1/SHIP2. Interacts with RANBP9 and RANBP10, as well as SPSB1, SPSB2, SPSB3 and SPSB4. SPSB1 binding occurs in the presence and in the absence of HGF, however HGF treatment has a positive effect on this interaction. Interacts with MUC20; prevents interaction with GRB2 and suppresses hepatocyte growth factor-induced cell proliferation. Interacts with GRB10. Interacts with PTPN1 and PTPN2. Interacts with HSP90AA1 and HSP90AB1; the interaction suppresses MET kinase activity. Interacts with tensin TNS3. Interacts (when phosphorylated) with tensin TNS4 (via SH2 domain); the interaction increases MET protein stability by inhibiting MET endocytosis and subsequent lysosomal degradation. Post-translationally, autophosphorylated in response to ligand binding on Tyr-1235 and Tyr-1236 in the kinase domain leading to further phosphorylation of Tyr-1350 and Tyr-1357 in the C-terminal multifunctional docking site. Dephosphorylated by PTPRJ at Tyr-1350 and Tyr-1366. Dephosphorylated by PTPN1 and PTPN2. In terms of processing, ubiquitinated. Ubiquitination by CBL regulates the receptor stability and activity through proteasomal degradation. O-mannosylation of IPT/TIG domains by TMEM260 is required for protein maturation. O-mannosylated residues are composed of single mannose glycans that are not elongated or modified.

It is found in the membrane. It carries out the reaction L-tyrosyl-[protein] + ATP = O-phospho-L-tyrosyl-[protein] + ADP + H(+). With respect to regulation, in its inactive state, the C-terminal tail interacts with the catalytic domain and inhibits the kinase activity. Upon ligand binding, the C-terminal tail is displaced and becomes phosphorylated, thus increasing the kinase activity. In terms of biological role, receptor tyrosine kinase that transduces signals from the extracellular matrix into the cytoplasm by binding to hepatocyte growth factor/HGF ligand. Regulates many physiological processes including proliferation, scattering, morphogenesis and survival. Ligand binding at the cell surface induces autophosphorylation of MET on its intracellular domain that provides docking sites for downstream signaling molecules. Following activation by ligand, interacts with the PI3-kinase subunit PIK3R1, PLCG1, SRC, GRB2, STAT3 or the adapter GAB1. Recruitment of these downstream effectors by MET leads to the activation of several signaling cascades including the RAS-ERK, PI3 kinase-AKT, or PLCgamma-PKC. The RAS-ERK activation is associated with the morphogenetic effects while PI3K/AKT coordinates prosurvival effects. During embryonic development, MET signaling plays a role in gastrulation, development and migration of muscles and neuronal precursors, angiogenesis and kidney formation. In adults, participates in wound healing as well as organ regeneration and tissue remodeling. Also promotes differentiation and proliferation of hematopoietic cells. The protein is Hepatocyte growth factor receptor (MET) of Dasypus novemcinctus (Nine-banded armadillo).